We begin with the raw amino-acid sequence, 477 residues long: MTVVTRFAPSPTGFLHIGGGRTALFNWLFARHHGGKFLLRIEDTDRARSTDAAVEAIFDGIKWLGLDWDGEAVMQFARACRHAEVARQLLDEGKAYRCYCTQDELTAIREEQKAKGQPMRYPGIWRDRPATDAPEGAPFVVRLKAPAEGETIIADLVQGDVRVANDQLDDMVLLRADGTPTYMLSVVVDDHDMGITHVIRGDDHLTNAFRQYQLYKACGWEVPTFAHIPLIHGPDGAKLSKRHGALGVDAYRDMGFLPEAMRNYLLRLGWSHGDDEIISTEQAVEWFTLDSVGRSPSRFDFVKLTNLNGHYMRGADDGRLTEVLVPLLEAKTGKALSGESVARLRTGMTGLKERAKTMVELADSALFYVAERPLALDEKAAKTMADETATADLAAYRTEVKELGAWTRDTLEDAARRLAEARGQKLGKIAQPLRAALAGSSVSPPIFEVMEVLGREESLGRIEDALGGTRPTTSTAA.

Residues 9 to 19 carry the 'HIGH' region motif; that stretch reads PSPTGFLHIGG. Positions 238-242 match the 'KMSKS' region motif; sequence KLSKR. Residue lysine 241 participates in ATP binding.

Belongs to the class-I aminoacyl-tRNA synthetase family. Glutamate--tRNA ligase type 1 subfamily. In terms of assembly, monomer.

It is found in the cytoplasm. It carries out the reaction tRNA(Glu) + L-glutamate + ATP = L-glutamyl-tRNA(Glu) + AMP + diphosphate. Functionally, catalyzes the attachment of glutamate to tRNA(Glu) in a two-step reaction: glutamate is first activated by ATP to form Glu-AMP and then transferred to the acceptor end of tRNA(Glu). The chain is Glutamate--tRNA ligase 2 from Paramagnetospirillum magneticum (strain ATCC 700264 / AMB-1) (Magnetospirillum magneticum).